A 908-amino-acid chain; its full sequence is UPF0182 protein Csac_0864 (908 aa).

7 helical membrane passes run 22–42 (FVISILVILAIVFSIAFDLFL), 62–82 (FYVKLSVQVVSFMILFFVFFV), 98–118 (ISLLKKNILNVIVSVLLALIA), 166–186 (FLFYLVIFVCIYTVVLYIVLY), 208–228 (HIFFNLILIFVIKIFTLKYEM), 253–273 (YFRLSYIVLVAVILLSIYFFI), and 286–306 (SYIGWAVLGTIIATAFQYFVV).

Belongs to the UPF0182 family.

The protein resides in the cell membrane. The polypeptide is UPF0182 protein Csac_0864 (Caldicellulosiruptor saccharolyticus (strain ATCC 43494 / DSM 8903 / Tp8T 6331)).